The sequence spans 369 residues: Putative FAD-dependent monooxygenase YetM (369 aa).

Residues 1–32 (MKHMLIAGGGIGGLSAAISLRKAGFSVTLCEA) form the signal peptide. Residues G12, 31 to 32 (EA), V126, and D285 contribute to the FAD site.

FAD serves as cofactor.

This Bacillus subtilis (strain 168) protein is Putative FAD-dependent monooxygenase YetM (yetM).